Reading from the N-terminus, the 252-residue chain is F-box protein At5g39250 (252 aa).

The F-box domain occupies 1 to 42 (MFSEEVLKNVFPLLEGEDLASCMGVCKQWRDIARDDFYWKCQ).

This chain is F-box protein At5g39250, found in Arabidopsis thaliana (Mouse-ear cress).